The chain runs to 303 residues: N-acetyl-D-glucosamine kinase (303 aa).

ATP-binding positions include glycine 4–lysine 11 and glycine 133–phenylalanine 140. Histidine 157, cysteine 177, cysteine 179, and cysteine 184 together coordinate Zn(2+).

Belongs to the ROK (NagC/XylR) family. NagK subfamily.

The catalysed reaction is N-acetyl-D-glucosamine + ATP = N-acetyl-D-glucosamine 6-phosphate + ADP + H(+). Its pathway is cell wall biogenesis; peptidoglycan recycling. Its function is as follows. Catalyzes the phosphorylation of N-acetyl-D-glucosamine (GlcNAc) derived from cell-wall degradation, yielding GlcNAc-6-P. This is N-acetyl-D-glucosamine kinase from Shigella sonnei (strain Ss046).